We begin with the raw amino-acid sequence, 63 residues long: UPF0370 protein PC1_1167 (63 aa).

A helical membrane pass occupies residues 3–23 (WLADYWWIILIILIGMLINGI). The tract at residues 37-63 (NKPKLPPHRDNNDKWDDEDDDWPKKKP) is disordered.

The protein belongs to the UPF0370 family.

The protein localises to the cell membrane. The protein is UPF0370 protein PC1_1167 of Pectobacterium carotovorum subsp. carotovorum (strain PC1).